Consider the following 227-residue polypeptide: Nudix hydrolase 27, chloroplastic (227 aa).

The transit peptide at 1–44 directs the protein to the chloroplast; the sequence is MAVKASGFIGKSAISVHLDFSSFPVKFSCLKQFSVSSPKPLVVL. The Nudix hydrolase domain occupies 61 to 208; that stretch reads GYRKNVGICL…KRPVYEHVIK (148 aa). A Nudix box motif is present at residues 94–115; that stretch reads GGADEGEDLRNAAFRELREETG. Residues Glu109 and Glu113 each coordinate Mn(2+).

The protein belongs to the Nudix hydrolase family. The cofactor is Mg(2+). Mn(2+) is required as a cofactor. In terms of tissue distribution, expressed in roots, leaves, stems and inflorescences.

The protein resides in the plastid. It is found in the chloroplast. In terms of biological role, mediates the hydrolysis of some nucleoside diphosphate derivatives. Can use diadenosine 5',5'''-P(1)P(5) pentaphosphate (Ap(5)A) as substrates. The chain is Nudix hydrolase 27, chloroplastic (NUDT27) from Arabidopsis thaliana (Mouse-ear cress).